A 1300-amino-acid polypeptide reads, in one-letter code: Histone-lysine N-methyltransferase Suv4-20 (1300 aa).

Residues 1-136 form a disordered region; sequence MVVGSNHTRR…GSGSVVSGLN (136 aa). Residues 14–62 are compositionally biased toward low complexity; sequence GSRFTNSSSSSSTSGGPTASASSTTSVTSSLATNSTSTSTAAALLSSMS. The segment covering 79 to 97 has biased composition (polar residues); the sequence is QTNQQHHQVAHSQPHATHY. Residues 116 to 128 are compositionally biased toward gly residues; sequence GSGGGSAGSGSGS. In terms of domain architecture, SET spans 255–366; it reads EACYRYTLEE…VGEEITCFYG (112 aa). Disordered stretches follow at residues 432–490, 535–574, 669–744, 756–856, and 891–927; these read SRAN…GKEA, QQHH…QQMA, HQSQ…SAGR, NNNI…TQGI, and ALGG…VEPL. The segment covering 435–451 has biased composition (low complexity); sequence NSTNSTSNSNSNTNDST. Residues 452–462 are compositionally biased toward polar residues; it reads GPSETSSTNGL. Residues 536–557 are compositionally biased toward basic residues; it reads QHHHQHHFHHHHHHHHHHHNHG. The segment covering 564-574 has biased composition (low complexity); the sequence is AEATAAVQQMA. Basic and acidic residues-rich tracts occupy residues 677-688, 698-707, and 722-735; these read RRSERQKEKLTD, QQKKEQKQQD, and QPEK…EQQK. Low complexity predominate over residues 756–821; it reads NNNIATTTNS…SSIPSSTSSE (66 aa). Composition is skewed to polar residues over residues 822-834 and 911-923; these read NQQQ…SCSP and EPTT…TISN. A phosphoserine mark is found at serine 831 and serine 833. A Phosphothreonine modification is found at threonine 930. Disordered stretches follow at residues 956–988, 1006–1188, 1212–1233, and 1263–1300; these read SLSN…NLTG, EHGN…PNGK, SPGQ…GGSG, and QISQ…HGQK. Positions 1009–1029 are enriched in acidic residues; that stretch reads NDDDEDEEEDDEEPAAEEEEE. Over residues 1041-1055 the composition is skewed to basic residues; the sequence is KKQRKKQRSRSRSSQ. 2 stretches are compositionally biased toward low complexity: residues 1117 to 1145 and 1161 to 1178; these read ASST…STSA and SPSS…TSTT. A compositionally biased stretch (basic residues) spans 1289–1300; the sequence is SHHHTNNHHGQK.

Belongs to the class V-like SAM-binding methyltransferase superfamily. Histone-lysine methyltransferase family. Suvar4-20 subfamily.

The protein localises to the nucleus. It is found in the chromosome. The catalysed reaction is L-lysyl(20)-[histone H4] + S-adenosyl-L-methionine = N(6)-methyl-L-lysyl(20)-[histone H4] + S-adenosyl-L-homocysteine + H(+). It carries out the reaction N(6)-methyl-L-lysyl(20)-[histone H4] + S-adenosyl-L-methionine = N(6),N(6)-dimethyl-L-lysyl(20)-[histone H4] + S-adenosyl-L-homocysteine + H(+). The enzyme catalyses N(6),N(6)-dimethyl-L-lysyl(20)-[histone H4] + S-adenosyl-L-methionine = N(6),N(6),N(6)-trimethyl-L-lysyl(20)-[histone H4] + S-adenosyl-L-homocysteine + H(+). In terms of biological role, histone methyltransferase that specifically trimethylates 'Lys-20' of histone H4. H4 'Lys-20' trimethylation represents a specific tag for epigenetic transcriptional repression. Mainly functions in pericentric heterochromatin regions, thereby playing a central role in the establishment of constitutive heterochromatin in these regions. Acts as a dominant suppressor of position-effect variegation. The sequence is that of Histone-lysine N-methyltransferase Suv4-20 (Hmt4-20) from Drosophila melanogaster (Fruit fly).